Consider the following 161-residue polypeptide: Endoribonuclease YbeY (161 aa).

Histidine 127, histidine 131, and histidine 137 together coordinate Zn(2+).

The protein belongs to the endoribonuclease YbeY family. Zn(2+) serves as cofactor.

The protein resides in the cytoplasm. In terms of biological role, single strand-specific metallo-endoribonuclease involved in late-stage 70S ribosome quality control and in maturation of the 3' terminus of the 16S rRNA. This is Endoribonuclease YbeY from Listeria monocytogenes serotype 4b (strain CLIP80459).